Consider the following 748-residue polypeptide: Meprin A subunit alpha (748 aa).

A signal peptide spans 1–20 (MLWTLPVCLLSLSFSAHIAA). Residues 21–66 (VSIQHLSTGHDHDDVDVGEQQKDISEINSAAGLNLFQGDILLPRTR) constitute a propeptide that is removed on maturation. Residues 67-261 (NALRDPSSRW…TRLNRMYNCT (195 aa)) enclose the Peptidase M12A domain. The Extracellular portion of the chain corresponds to 67-719 (NALRDPSSRW…RCQAMHVHGS (653 aa)). 3 disulfide bridges follow: C108-C260, C129-C148, and C270-C432. N-linked (GlcNAc...) asparagine glycosylation is present at N141. H156 contacts Zn(2+). E157 is an active-site residue. Zn(2+)-binding residues include H160 and H166. N223, N259, N319, N441, and N542 each carry an N-linked (GlcNAc...) asparagine glycan. Residues 265–434 (TLLDHCAFEK…ITLTETPCPT (170 aa)) form the MAM domain. The MATH domain occupies 435 to 596 (GVWTIRNISQ…DDTLIIFVDF (162 aa)). Residues 641–668 (LPRRLDQRQPSRPKRSVENTGPMEDHNW) form a disordered region. The region spanning 672 to 712 (FRDPCDPNPCQNEGTCVNVKGMASCRCVSGHAFFYTGERCQ) is the EGF-like domain. 3 disulfides stabilise this stretch: C676-C687, C681-C696, and C698-C711. The chain crosses the membrane as a helical span at residues 720–739 (LLGLLIGCITALIFLTFITF). The Cytoplasmic segment spans residues 740 to 748 (SNTYQKLRQ).

As to quaternary structure, homotetramer consisting of disulfide-linked alpha subunits, homooligomer consisting of disulfide-linked alpha subunit homodimers, or heterotetramer of two alpha and two beta subunits formed by non-covalent association of two disulfide-linked heterodimers. Interacts with MBL2 through its carbohydrate moiety. This interaction may inhibit its catalytic activity. Zn(2+) is required as a cofactor. Post-translationally, N-glycosylated; contains GlcNAc, galactose, mannose and a small amount of fucose. As to expression, colocalized with E-24.11 in proximal tubules of juxtamedullary nephrons.

The protein resides in the membrane. It carries out the reaction Hydrolysis of protein and peptide substrates preferentially on carboxyl side of hydrophobic residues.. Its activity is regulated as follows. Inhibited by actinonin. This Rattus norvegicus (Rat) protein is Meprin A subunit alpha (Mep1a).